We begin with the raw amino-acid sequence, 431 residues long: Selenocysteine lyase (431 aa).

At Lys239 the chain carries N6-(pyridoxal phosphate)lysine. Residue Cys367 is the S-selanylcysteine intermediate of the active site.

This sequence belongs to the class-V pyridoxal-phosphate-dependent aminotransferase family. In terms of assembly, homodimer. The cofactor is pyridoxal 5'-phosphate.

It is found in the cytoplasm. It localises to the cytosol. It carries out the reaction L-selenocysteine + AH2 = hydrogenselenide + L-alanine + A + H(+). Catalyzes the decomposition of L-selenocysteine to L-alanine and elemental selenium. The chain is Selenocysteine lyase (scly) from Xenopus tropicalis (Western clawed frog).